A 2491-amino-acid polypeptide reads, in one-letter code: Cation-independent mannose-6-phosphate receptor (2491 aa).

The N-terminal stretch at 1 to 40 (MGAAAGRSPHLGPAPARRPQRSLLLLQLLLLVAAPGSTQA) is a signal peptide. Over 41–2304 (QAAPFPELCS…MHKGLSERSQ (2264 aa)) the chain is Lumenal. MRH domains are found at residues 47-163 (ELCS…ACKK), 172-320 (VPCY…ACHR), 326-468 (KTCS…ACVK), 473-619 (LLCG…ACVL), 625-762 (ENCT…ACPE), 765-924 (LECV…ACPI), 932-1079 (QACS…ACVP), 1082-1219 (VDCQ…ACPV), 1225-1363 (DNCE…ACPP), 1367-1508 (TECS…ACPM), 1514-1648 (DDCQ…ACEQ), and 1650-1797 (TECS…VCPD). Disulfide bonds link C49/C69 and C77/C84. The N-linked (GlcNAc...) asparagine glycan is linked to N112. 8 disulfides stabilise this stretch: C117-C149, C134-C161, C174-C212, C228-C235, C275-C306, C288-C318, C328-C366, and C374-C382. 2 N-linked (GlcNAc...) asparagine glycosylation sites follow: N400 and N435. Intrachain disulfides connect C420–C454, C434–C466, C475–C519, and C531–C538. Residues N543 and N581 are each glycosylated (N-linked (GlcNAc...) asparagine). 2 cysteine pairs are disulfide-bonded: C572–C605 and C586–C617. N-linked (GlcNAc...) asparagine glycosylation occurs at N626. Disulfide bonds link C627/C664, C672/C679, C731/C760, C767/C814, and C823/C830. A glycan (N-linked (GlcNAc...) asparagine) is linked at N747. Residue N871 is glycosylated (N-linked (GlcNAc...) asparagine). 7 cysteine pairs are disulfide-bonded: C875–C910, C893–C922, C934–C970, C976–C987, C1042–C1077, C1084–C1125, and C1134–C1142. N951 and N957 each carry an N-linked (GlcNAc...) asparagine glycan. N1164 carries an N-linked (GlcNAc...) asparagine glycan. 4 cysteine pairs are disulfide-bonded: C1177/C1205, C1190/C1217, C1227/C1262, and C1270/C1282. N1246 is a glycosylation site (N-linked (GlcNAc...) asparagine). A glycan (N-linked (GlcNAc...) asparagine) is linked at N1312. Cystine bridges form between C1319–C1349, C1333–C1361, C1369–C1408, C1420–C1427, C1461–C1494, C1476–C1506, C1516–C1553, C1559–C1566, C1598–C1634, C1614–C1646, C1652–C1695, C1706–C1713, C1750–C1783, C1766–C1795, C1804–C1839, C1850–C1856, C1893–C1975, C1903–C1927, C1917–C1942, C1957–C1987, C1994–C2029, C2039–C2046, C2082–C2113, and C2096–C2125. N-linked (GlcNAc...) asparagine glycosylation is present at N1656. Residue N1757 is glycosylated (N-linked (GlcNAc...) asparagine). The 188-residue stretch at 1802-1989 (DGCTLTDEQL…EWKTKVVCPP (188 aa)) folds into the Fibronectin type-II domain. N-linked (GlcNAc...) asparagine glycosylation is present at N1816. 2 consecutive MRH domains span residues 1992–2127 (LECK…ACAV) and 2135–2280 (VNGT…VCPL). A glycan (N-linked (GlcNAc...) asparagine) is linked at N2085. N2136 carries an N-linked (GlcNAc...) asparagine glycan. Cystine bridges form between C2188–C2194, C2232–C2266, and C2248–C2278. A helical membrane pass occupies residues 2305-2327 (AVGAVLSLLLVALTCCLLALLLY). Over 2328–2491 (KKERRETVIS…DDSDEDLLHI (164 aa)) the chain is Cytoplasmic. The residue at position 2352 (K2352) is an N6-acetyllysine. S2409 carries the phosphoserine modification. The segment at 2424–2491 (GRGAGAESSH…DDSDEDLLHI (68 aa)) is disordered. R2425 carries the omega-N-methylarginine modification. Residues 2444–2459 (QEREDDRVGLVRGEKA) show a composition bias toward basic and acidic residues. The span at 2464-2477 (SSSAQQKTVSSTKL) shows a compositional bias: polar residues. Phosphoserine is present on residues S2479 and S2484. Basic and acidic residues predominate over residues 2479–2491 (SFHDDSDEDLLHI).

It belongs to the MRL1/IGF2R family. As to quaternary structure, binds HA-I and HA-II plasma membrane adapters. Interacts with DPP4; the interaction is direct. Binds GGA1, GGA2 and GGA3. Interacts with the heterotrimeric retromer cargo-selective complex (CSC), formed by VPS26 (VPS26A or VPS26B), VPS29 and VPS35; which is involved in retrograde trafficking of the receptor from endosomes to the Golgi apparatus. Palmitoylated. Undergoes cysteine S-palmitoylation which promotes interaction with the retromer cargo-selective complex which mediates its retrograde trafficking to the Golgi apparatus.

The protein localises to the golgi apparatus membrane. It is found in the endosome membrane. In terms of biological role, mediates the transport of phosphorylated lysosomal enzymes from the Golgi complex and the cell surface to lysosomes. Lysosomal enzymes bearing phosphomannosyl residues bind specifically to mannose-6-phosphate receptors in the Golgi apparatus and the resulting receptor-ligand complex is transported to an acidic prelysosomal compartment where the low pH mediates the dissociation of the complex. The receptor is then recycled back to the Golgi for another round of trafficking through its binding to the retromer. This receptor also binds IGF2. Acts as a positive regulator of T-cell coactivation by binding DPP4. In Homo sapiens (Human), this protein is Cation-independent mannose-6-phosphate receptor (IGF2R).